Here is a 622-residue protein sequence, read N- to C-terminus: Cilia- and flagella-associated protein 206 (622 aa).

Positions 570–592 (SQVYPPKDTSTQSMREDSTGVPR) are disordered.

This sequence belongs to the CFAP206 family.

Its subcellular location is the cytoplasm. It is found in the cytoskeleton. The protein resides in the cilium axoneme. It localises to the cilium basal body. Essential for sperm motility and is involved in the regulation of the beating frequency of motile cilia on the epithelial cells of the respiratory tract. Required for the establishment of radial spokes in sperm flagella. The chain is Cilia- and flagella-associated protein 206 from Homo sapiens (Human).